A 141-amino-acid polypeptide reads, in one-letter code: Large ribosomal subunit protein uL11 (141 aa).

The protein belongs to the universal ribosomal protein uL11 family. In terms of assembly, part of the ribosomal stalk of the 50S ribosomal subunit. Interacts with L10 and the large rRNA to form the base of the stalk. L10 forms an elongated spine to which L12 dimers bind in a sequential fashion forming a multimeric L10(L12)X complex. Post-translationally, one or more lysine residues are methylated.

Forms part of the ribosomal stalk which helps the ribosome interact with GTP-bound translation factors. The sequence is that of Large ribosomal subunit protein uL11 from Fusobacterium nucleatum subsp. nucleatum (strain ATCC 25586 / DSM 15643 / BCRC 10681 / CIP 101130 / JCM 8532 / KCTC 2640 / LMG 13131 / VPI 4355).